The primary structure comprises 1655 residues: Protein scribble homolog (1655 aa).

The sufficient for targeting to adherens junction and to inhibit cell proliferation stretch occupies residues 1-818 (MLKCIPLWRC…MRVWRERMVE (818 aa)). A Phosphoserine modification is found at serine 37. LRR repeat units follow at residues 37 to 58 (SLEELLLDANQLRELPKPFFRL), 60 to 81 (NLRKLGLSDNEIQRLPPEVANF), 83 to 104 (QLVELDVSRNDIPEIPESIKFC), 106 to 127 (ALEIADFSGNPLSRLPDGFTQL), 129 to 150 (SLAHLALNDVSLQALPGDVGNL), 152 to 174 (NLVTLELRENLLKSLPASLSFLV), 175 to 197 (KLEQLDLGGNDLEVLPDTLGALP), 198 to 219 (NLRELWLDRNQLSALPPELGNL), 221 to 243 (RLVCLDVSENRLEELPAELGGLV), 244 to 265 (LLTDLLLSQNLLRRLPDGIGQL), 267 to 288 (QLSILKVDQNRLCEVTEAIGDC), 290 to 312 (NLSELILTENLLMALPRSLGKLT), 313 to 334 (KLTNLNVDRNHLEALPPEIGGC), 336 to 357 (ALSVLSLRDNRLAVLPPELAHT), 359 to 381 (ELHVLDVAGNRLQSLPFALTHLN), and 382 to 402 (LKALWLAENQAQPMLRFQTED). At threonine 378 the chain carries Phosphothreonine. Disordered stretches follow at residues 417-440 (PQQPPPSLEDAGQQGSLSETWSDA), 459-606 (DAEE…IRKD), and 628-702 (LLQG…VSAP). Residues 458–474 (EDAEEAAAEKRGLQRRA) are a coiled coil. Threonine 475 bears the Phosphothreonine mark. Residues 479–494 (SELKVMKRSIEGRRSE) are compositionally biased toward basic and acidic residues. Serine 504 carries the post-translational modification Phosphoserine. Residues 537-555 (EGPSAEAQGGSQQEATTAG) show a composition bias toward low complexity. Acidic residues-rich tracts occupy residues 556 to 565 (GEEDAEEDYQ) and 660 to 694 (EEEEEEEGSPQEEEEEEEEENRAEEEEASTEEEDK). Residues 656–701 (RAQKEEEEEEEGSPQEEEEEEEEENRAEEEEASTEEEDKEGAVVSA) adopt a coiled-coil conformation. Phosphoserine is present on serine 688. A Phosphothreonine modification is found at threonine 689. A phosphoserine mark is found at serine 708 and serine 764. Positions 717 to 1229 (IEPARIEEEE…SLESISSIDR (513 aa)) are interaction with ARHGEF7. The 88-residue stretch at 728 to 815 (TLTILRQTGG…AVQMRVWRER (88 aa)) folds into the PDZ 1 domain. Residues 728 to 1194 (TLTILRQTGG…TVLVCDGFEA (467 aa)) form a required for interaction with VIM region. Threonine 826 carries the post-translational modification Phosphothreonine. The interval 827–853 (PLRPEDDYSPRERRGGGLRLPLLPPES) is disordered. Residues 829–841 (RPEDDYSPRERRG) show a composition bias toward basic and acidic residues. 4 positions are modified to phosphoserine: serine 835, serine 853, serine 875, and serine 939. 3 PDZ domains span residues 862 to 950 (VACL…EREA), 1004 to 1093 (EIRL…RRDP), and 1100 to 1194 (ELCI…GFEA). The tract at residues 1105–1117 (KAPGERLGISIRG) is interaction with tick-borne encephalitis virus RNA-directed RNA polymerase NS5. 11 positions are modified to phosphoserine: serine 1140, serine 1220, serine 1223, serine 1226, serine 1232, serine 1276, serine 1279, serine 1295, serine 1298, serine 1306, and serine 1309. Over residues 1227-1242 (IDRELSPEGPGKEKEL) the composition is skewed to basic and acidic residues. A disordered region spans residues 1227-1246 (IDRELSPEGPGKEKELPGQT). A disordered region spans residues 1277–1489 (AGSVQRVPSG…APERALSPAE (213 aa)). Residues 1302 to 1311 (QQPPSPPSPD) are compositionally biased toward pro residues. Threonine 1342 is modified (phosphothreonine). A Phosphoserine modification is found at serine 1348. Over residues 1353–1365 (SFRERQKYFELEV) the composition is skewed to basic and acidic residues. Serine 1378 is modified (phosphoserine). Residues 1379–1419 (LVGADDLRKMQEEEARKLQQKRAQMLREAAEAGAEARLALD) are a coiled coil. Over residues 1383 to 1395 (DDLRKMQEEEARK) the composition is skewed to basic and acidic residues. Residues 1409–1421 (EAGAEARLALDGE) show a composition bias toward low complexity. Over residues 1422–1432 (TLGEEEQEDEQ) the composition is skewed to acidic residues. Residues serine 1437, serine 1445, and serine 1448 each carry the phosphoserine modification. A compositionally biased stretch (basic and acidic residues) spans 1461–1472 (AKAERRHQERLR). Phosphoserine occurs at positions 1475, 1486, and 1508. The tract at residues 1520-1568 (LSRSQEGRGTRGPLERLAEAPSPAPTPSPTPVEDLGPQTSTSPGRLPLS) is disordered. The segment covering 1524 to 1537 (QEGRGTRGPLERLA) has biased composition (basic and acidic residues). The residue at position 1541 (serine 1541) is a Phosphoserine. Position 1545 is a phosphothreonine (threonine 1545). A phosphoserine mark is found at serine 1547, serine 1561, and serine 1591. Positions 1622–1655 (GRPSPGAVGPEDVALCSSRRPVRPGRRGLGPVPS) are disordered.

Belongs to the LAP (LRR and PDZ) protein family. Interacts with UBE3A. Interacts with PAK1 and PAK2. Interacts (via PDZ domains) with VANGL2. Interacts (via PDZ domains) with LPP and TRIP6; the interaction is direct. Interacts (via PDZ domains) with TJP2. Interacts (via PDZ domains) with APC; may mediate APC targeting to adherens junctions of epithelial cells. Interacts (via PDZ domains) with TSHR; regulates TSHR trafficking and function. Interacts with ARHGEF7 and GIT1; interacts directly with ARHGEF7. Interacts with CTNNB1. Interacts with MAPK12. Interacts (via PDZ domains 1 and 3) with MCC. Interacts with DLG5. Interacts with STK4/MST1 and LATS1 in the presence of DLG5. Interacts (via PDZ domain 3) with CRTAM (via PDZ-binding motif); the interaction promotes CRTAM and SCRIB polarization in a subset of CD4+ T-cells. Interacts with YES1, when YES1 is in a closed conformation; the interaction facilitates YES1 autophosphorylation. Interacts (via PDZ domains) with VIM; the interaction protects SCRIB from proteasomal degradation and facilitates SCRIB localization to intermediate filaments, the interaction is reduced by cell contact inhibition. In terms of assembly, (Microbial infection) Interacts (via fourth PDZ domain) with tick-borne encephalitis virus RNA-directed RNA polymerase NS5; this interaction targets viral NS5 to the cell membrane periphery and nucleus and prevents STAT1 phosphorylation, and thus, the activation of the JAK-STAT signaling pathway. Interacts with HPV E6. Interacts with influenza A virus protein NS1; the interaction results in the translocation of SCRIB from the cell membrane to perinuclear puncta. Ubiquitinated; targeted for UBE3A-dependent multiubiquitination in the presence of high-risk HPV E6 proteins and degraded. In terms of processing, palmitoylated. Could be depalmitoylated by LYPLA1 and/or LYPLA2. Palmitoylation of SCRIB by ZDHHC7 is required for its localization to cell-cell junctions, function in the establishement of epithelial cell polarity and the regulation of downstream signaling pathways important for epithelial cell differentiation. As to expression, expressed in kidney, skeletal muscles, liver, lung, breast, intestine, placenta and skin mainly in epithelial cells (at protein level).

Its subcellular location is the cell membrane. The protein localises to the cell junction. It is found in the adherens junction. The protein resides in the cell projection. It localises to the lamellipodium. Its subcellular location is the cytoplasm. The protein localises to the postsynapse. It is found in the presynapse. In terms of biological role, scaffold protein involved in different aspects of polarized cell differentiation regulating epithelial and neuronal morphogenesis and T-cell polarization. Via its interaction with CRTAM, required for the late phase polarization of a subset of CD4+ T-cells, which in turn regulates TCR-mediated proliferation and IFNG and IL22 production. Plays a role in cell directional movement, cell orientation, cell sheet organization and Golgi complex polarization at the cell migration front. Promotes epithelial cell layer barrier function via maintaining cell-cell adhesion. Most probably functions in the establishment of apico-basal cell polarity. May function in cell proliferation regulating progression from G1 to S phase and as a positive regulator of apoptosis for instance during acinar morphogenesis of the mammary epithelium. May regulate cell invasion via MAPK-mediated cell migration and adhesion. May play a role in exocytosis and in the targeting of synaptic vesicles to synapses. Functions as an activator of Rac GTPase activity. This Homo sapiens (Human) protein is Protein scribble homolog.